The primary structure comprises 329 residues: MSAPSDPAVATHPQAGAAAAASSSSGLTFKLHPLVIVNVSDHHTRVKAQAACSGDGASSAAAGGQPPRVFGCVIGVQRGRTVEIFNSFELVLDPVSGTLDRAFLEKKQELYKKVFPDFYVLGWYSTGSDVRDTDMQIHKALMDINESPVYLLLNPAINLSQKDLPVTIYESELHVIDGSPQLIFVRANYTIETVEAERISVDHVAHLKPSDGGSAATQLAAHLTGIHSAIKMLNSRVRVIHQYLVSMQKGDMPLDNSLLRQVSSLVRRLPAMESEKFQDDFLMEYNDTLLMTYLAMFTNCSSTMNELVEKFNATYERSTARRGGRGAFM.

The 132-residue stretch at 44–175 (TRVKAQAACS…VTIYESELHV (132 aa)) folds into the MPN domain.

It belongs to the peptidase M67A family. CSN6 subfamily. In terms of assembly, component of the CSN complex, probably composed of CSN1, CSN2, CSN3, CSN4, CSN5, CSN6, CSN7 and CSN8.

Functionally, component of the COP9 signalosome complex (CSN), a complex involved in various cellular and developmental processes such as photomorphogenesis and response to hormones. The CSN complex is an essential regulator of the ubiquitin (Ubl) conjugation pathway by mediating the deneddylation of the cullin subunits of SCF-type E3 ligase complexes, leading to decrease the Ubl ligase activity of SCF. Involved in early response to iron deficiency. The sequence is that of COP9 signalosome complex subunit 6 from Oryza sativa subsp. japonica (Rice).